The sequence spans 325 residues: Beta-ketoacyl-[acyl-carrier-protein] synthase III 2 (325 aa).

Catalysis depends on residues Cys-113 and His-250. Positions 251-255 (SANLR) are ACP-binding. Asn-280 is an active-site residue.

The protein belongs to the thiolase-like superfamily. FabH family. Homodimer.

Its subcellular location is the cytoplasm. It catalyses the reaction 3-methylbutanoyl-CoA + malonyl-[ACP] + H(+) = 5-methyl-3-oxohexanoyl-[ACP] + CO2 + CoA. The catalysed reaction is 2-methylpropanoyl-CoA + malonyl-[ACP] + H(+) = 4-methyl-3-oxopentanoyl-[ACP] + CO2 + CoA. The enzyme catalyses (2S)-2-methylbutanoyl-CoA + malonyl-[ACP] + H(+) = (4S)-4-methyl-3-oxohexanoyl-[ACP] + CO2 + CoA. It carries out the reaction malonyl-[ACP] + acetyl-CoA + H(+) = 3-oxobutanoyl-[ACP] + CO2 + CoA. It catalyses the reaction malonyl-[ACP] + propanoyl-CoA + H(+) = 3-oxopentanoyl-[ACP] + CO2 + CoA. The catalysed reaction is butanoyl-CoA + malonyl-[ACP] + H(+) = 3-oxohexanoyl-[ACP] + CO2 + CoA. The enzyme catalyses pentanoyl-CoA + malonyl-[ACP] + H(+) = 3-oxoheptanoyl-[ACP] + CO2 + CoA. It carries out the reaction hexanoyl-CoA + malonyl-[ACP] + H(+) = 3-oxooctanoyl-[ACP] + CO2 + CoA. It catalyses the reaction heptanoyl-CoA + malonyl-[ACP] + H(+) = 3-oxononanoyl-[ACP] + CO2 + CoA. The protein operates within lipid metabolism; fatty acid biosynthesis. Catalyzes the condensation reaction of fatty acid synthesis by the addition to an acyl acceptor of two carbons from malonyl-ACP. Catalyzes the first condensation reaction which initiates fatty acid synthesis and may therefore play a role in governing the total rate of fatty acid production. Possesses both acetoacetyl-ACP synthase and acetyl transacylase activities. Has some substrate specificity for branched chain acyl-CoA, determining the biosynthesis of branched-chain of fatty acids instead of straight-chain. This chain is Beta-ketoacyl-[acyl-carrier-protein] synthase III 2, found in Bacillus subtilis (strain 168).